A 269-amino-acid polypeptide reads, in one-letter code: Protein IAL1 (269 aa).

Positions 32–133 (SPCAACKFLR…QDLARAKYEL (102 aa)) constitute an LOB domain.

Belongs to the LOB domain-containing protein family. In terms of tissue distribution, expressed in leaves, leaf primordia, immature ears, immature tassels, whole ovules, silk and husk leaves.

The protein resides in the nucleus. The chain is Protein IAL1 from Zea mays (Maize).